Consider the following 336-residue polypeptide: Biotin synthase (336 aa).

One can recognise a Radical SAM core domain in the interval 52-279; it reads KAIQLSTLMS…KSYVRLSAGR (228 aa). Residues Cys67, Cys71, and Cys74 each coordinate [4Fe-4S] cluster. 4 residues coordinate [2Fe-2S] cluster: Cys111, Cys142, Cys202, and Arg274.

Belongs to the radical SAM superfamily. Biotin synthase family. Homodimer. Requires [4Fe-4S] cluster as cofactor. The cofactor is [2Fe-2S] cluster.

The enzyme catalyses (4R,5S)-dethiobiotin + (sulfur carrier)-SH + 2 reduced [2Fe-2S]-[ferredoxin] + 2 S-adenosyl-L-methionine = (sulfur carrier)-H + biotin + 2 5'-deoxyadenosine + 2 L-methionine + 2 oxidized [2Fe-2S]-[ferredoxin]. The protein operates within cofactor biosynthesis; biotin biosynthesis; biotin from 7,8-diaminononanoate: step 2/2. In terms of biological role, catalyzes the conversion of dethiobiotin (DTB) to biotin by the insertion of a sulfur atom into dethiobiotin via a radical-based mechanism. This Pasteurella multocida (strain Pm70) protein is Biotin synthase.